Reading from the N-terminus, the 382-residue chain is S-adenosylmethionine synthase (382 aa).

An ATP-binding site is contributed by His-16. Asp-18 is a Mg(2+) binding site. Residue Glu-44 coordinates K(+). L-methionine contacts are provided by Glu-57 and Gln-100. Positions 100–110 (QSPDIAQGVDN) are flexible loop. ATP-binding positions include 165-167 (DAK), 231-232 (RF), Asp-240, 246-247 (RK), and Lys-267. An L-methionine-binding site is contributed by Asp-240. An L-methionine-binding site is contributed by Lys-271.

It belongs to the AdoMet synthase family. Homotetramer; dimer of dimers. It depends on Mg(2+) as a cofactor. K(+) is required as a cofactor.

The protein localises to the cytoplasm. The catalysed reaction is L-methionine + ATP + H2O = S-adenosyl-L-methionine + phosphate + diphosphate. It functions in the pathway amino-acid biosynthesis; S-adenosyl-L-methionine biosynthesis; S-adenosyl-L-methionine from L-methionine: step 1/1. In terms of biological role, catalyzes the formation of S-adenosylmethionine (AdoMet) from methionine and ATP. The overall synthetic reaction is composed of two sequential steps, AdoMet formation and the subsequent tripolyphosphate hydrolysis which occurs prior to release of AdoMet from the enzyme. The sequence is that of S-adenosylmethionine synthase from Legionella pneumophila (strain Lens).